A 277-amino-acid polypeptide reads, in one-letter code: 2-dehydro-3-deoxyphosphooctonate aldolase (277 aa).

This sequence belongs to the KdsA family.

The protein localises to the cytoplasm. The catalysed reaction is D-arabinose 5-phosphate + phosphoenolpyruvate + H2O = 3-deoxy-alpha-D-manno-2-octulosonate-8-phosphate + phosphate. The protein operates within carbohydrate biosynthesis; 3-deoxy-D-manno-octulosonate biosynthesis; 3-deoxy-D-manno-octulosonate from D-ribulose 5-phosphate: step 2/3. Its pathway is bacterial outer membrane biogenesis; lipopolysaccharide biosynthesis. This Syntrophotalea carbinolica (strain DSM 2380 / NBRC 103641 / GraBd1) (Pelobacter carbinolicus) protein is 2-dehydro-3-deoxyphosphooctonate aldolase.